The primary structure comprises 360 residues: MKTSMQRKLDQLSTRLAELNDLLSRENVTADLDQYRKLTREHAELGPVVEQYALWRQSRSDETAAQELLADPSMRDFAEDEIRSAREGMARLETELQKMLLPKDPNDDRNIFLEIRAGTGGDESALFAGDLLRMYLRFAERQRWQVEMMSESASDLGGYKEVIVRIAGQGAYSRLKFESGGHRVQRVPATETQGRIHTSACTVAVMPEADEIGEVEINPADLRIDTFRASGAGGQHINKTDSAVRVTHIPTGIVVECQDDRSQHKNKDRALKVLAARIKDKQYHEQHAKEAATRKSLIGSGDRSERIRTYNFPQGRMTDHRINLTLYRLEAIMDGDLDELIGALVTEHQAELLASLGEAD.

Residue Q235 is modified to N5-methylglutamine.

This sequence belongs to the prokaryotic/mitochondrial release factor family. Methylated by PrmC. Methylation increases the termination efficiency of RF1.

It is found in the cytoplasm. Functionally, peptide chain release factor 1 directs the termination of translation in response to the peptide chain termination codons UAG and UAA. The polypeptide is Peptide chain release factor 1 (Burkholderia cenocepacia (strain HI2424)).